Here is a 365-residue protein sequence, read N- to C-terminus: Histidinol-phosphate aminotransferase (365 aa).

The interval 1–22 is disordered; the sequence is MSRPVPNPGILDIAPYTPGKSP. K221 is modified (N6-(pyridoxal phosphate)lysine).

This sequence belongs to the class-II pyridoxal-phosphate-dependent aminotransferase family. Histidinol-phosphate aminotransferase subfamily. In terms of assembly, homodimer. It depends on pyridoxal 5'-phosphate as a cofactor.

It carries out the reaction L-histidinol phosphate + 2-oxoglutarate = 3-(imidazol-4-yl)-2-oxopropyl phosphate + L-glutamate. Its pathway is amino-acid biosynthesis; L-histidine biosynthesis; L-histidine from 5-phospho-alpha-D-ribose 1-diphosphate: step 7/9. The chain is Histidinol-phosphate aminotransferase from Rhodopseudomonas palustris (strain BisA53).